Consider the following 162-residue polypeptide: Regulatory protein RecX (162 aa).

This sequence belongs to the RecX family.

The protein localises to the cytoplasm. In terms of biological role, modulates RecA activity. This is Regulatory protein RecX from Xanthomonas axonopodis pv. citri (strain 306).